Reading from the N-terminus, the 862-residue chain is Protein PRQFV-amide (862 aa).

Positions 1–20 are cleaved as a signal peptide; it reads MSSQLLICSVFVLFTFGPNS. Residues 21-79 constitute a propeptide that is removed on maturation; sequence FPSCLAQEQAGNSDATQLSADAKAPESAKDKSGDVQNDGTKSVRSKRDLEIDFGSGDVQ. Residues 32–68 are disordered; it reads NSDATQLSADAKAPESAKDKSGDVQNDGTKSVRSKRD. The span at 43-53 shows a compositional bias: basic and acidic residues; that stretch reads KAPESAKDKSG. Position 86 is a valine amide (valine 86). The propeptide occupies 90–149; it reads AAPPVFQTPLVQDKISGFIPSETESPVIGEFAFPGSVFMDDEEALGAEEEPMDDEDLEFY. Valine amide is present on valine 156. The propeptide occupies 160-175; it reads GIDDYLLQEKLKDFIE. Residues valine 182, valine 190, valine 198, valine 206, valine 214, valine 222, valine 230, valine 238, and valine 246 each carry the valine amide modification. A propeptide spanning residues 250–259 is cleaved from the precursor; the sequence is EADPSFLFED. Residue valine 266 is modified to Valine amide. Residues 270 to 300 constitute a propeptide that is removed on maturation; that stretch reads SLDFLGGANWYNPYDVTMEPQSEGSDLQGFS. Valine 307 bears the Valine amide mark. Residues 311 to 319 constitute a propeptide that is removed on maturation; sequence DAFDMFEFS. A Valine amide modification is found at valine 326. The propeptide occupies 330–338; sequence DQDEMFDFS. Valine amide is present on valine 345. The propeptide occupies 349-357; that stretch reads DLQEFFDLS. Residue valine 364 is modified to Valine amide. The propeptide occupies 368–376; the sequence is EFDDEIDFS. Valine 383 is modified (valine amide). Positions 387-395 are excised as a propeptide; it reads ENDDDFDLS. Valine 402 is subject to Valine amide. Residues 406-414 constitute a propeptide that is removed on maturation; sequence ENDDEFDLS. At valine 421 the chain carries Valine amide. Basic and acidic residues predominate over residues 424–434; the sequence is RENDDELEFSK. Positions 424–528 are disordered; the sequence is RENDDELEFS…NNDDLDFSKR (105 aa). The propeptide occupies 425–433; the sequence is ENDDELEFS. Valine amide is present on valine 440. Basic and acidic residues predominate over residues 441–452; it reads GKREDDEIDFSK. A propeptide spanning residues 444–451 is cleaved from the precursor; sequence EDDEIDFS. Valine 458 carries the post-translational modification Valine amide. Over residues 459–471 the composition is skewed to basic and acidic residues; sequence GKRENDGEIDFSK. Residues 462–470 constitute a propeptide that is removed on maturation; that stretch reads ENDGEIDFS. Valine 477 bears the Valine amide mark. Positions 478 to 490 are enriched in basic and acidic residues; it reads GKRENDDEIDFSK. The propeptide occupies 481-489; that stretch reads ENDDEIDFS. Valine 496 bears the Valine amide mark. A compositionally biased stretch (basic and acidic residues) spans 497-508; the sequence is GKREDGEIDFSK. The propeptide occupies 500–507; it reads EDGEIDFS. Valine 514 is subject to Valine amide. Positions 515–527 are enriched in basic and acidic residues; the sequence is GKRENNDDLDFSK. A propeptide spanning residues 518 to 526 is cleaved from the precursor; sequence ENNDDLDFS. Residue valine 533 is modified to Valine amide. The propeptide occupies 537–545; that stretch reads EVDDEIDFS. The tract at residues 549–634 is disordered; it reads RQFVGKREND…RQFVGKREND (86 aa). Valine 552 carries the post-translational modification Valine amide. Residues 553 to 565 are compositionally biased toward basic and acidic residues; it reads GKRENDDDLDFSK. The propeptide occupies 556–564; that stretch reads ENDDDLDFS. Valine 571 carries the post-translational modification Valine amide. Residues 572–584 show a composition bias toward basic and acidic residues; it reads GKRENDDDLEFSK. A propeptide spanning residues 575–583 is cleaved from the precursor; the sequence is ENDDDLEFS. Valine 590 carries the valine amide modification. The propeptide occupies 594–602; sequence ENDPLLDFS. Residue valine 609 is modified to Valine amide. A compositionally biased stretch (basic and acidic residues) spans 610 to 622; it reads GKRENDDDLDFSK. Residues 613–621 constitute a propeptide that is removed on maturation; the sequence is ENDDDLDFS. Position 628 is a valine amide (valine 628). A propeptide spanning residues 632–640 is cleaved from the precursor; sequence ENDPLIDFS. Valine 647 carries the valine amide modification. Positions 651 to 659 are excised as a propeptide; the sequence is ESDGDFELS. A Valine amide modification is found at valine 666. Positions 670–677 are excised as a propeptide; it reads DVDGPGLS. Valine 684 is subject to Valine amide. The propeptide occupies 688-695; the sequence is EDYDIDFA. Valine 702 is modified (valine amide). The propeptide occupies 706–714; the sequence is GNEDEFEMS. A Valine amide modification is found at valine 721. The propeptide occupies 724–757; that stretch reads RNFEELDQDFLRHMHDILDKRIPQFVSLPSLTAA. Valine 764 is modified (valine amide). The propeptide occupies 768 to 812; it reads SDAAFLETLRHLRDYVGGQDEQNVSEFSYQHPYPSDLNDVGLIQQ. The residue at position 819 (valine 819) is a Valine amide. Residues 823–862 constitute a propeptide that is removed on maturation; the sequence is GGDVDDINTTYRLGDFVSQPMSFVEEPSWLCRQLNAFGIS.

In terms of tissue distribution, expressed abundantly in the abdominal ganglion, much less in the pedal and cerebral ganglia, and rarely in the buccal and pleural ganglia.

The protein resides in the secreted. PRQFV-amide may act as a modulator within the feeding system as well as in other systems of Aplysia. This is Protein PRQFV-amide from Aplysia californica (California sea hare).